The chain runs to 112 residues: Gastrula zinc finger protein XlCGF16.1 (112 aa).

C2H2-type zinc fingers lie at residues 6 to 28, 34 to 56, 62 to 84, and 90 to 112; these read YNCS…QKTH, FVCF…QRIH, FSCT…HKTH, and FLCF…HRTH.

This sequence belongs to the krueppel C2H2-type zinc-finger protein family.

It is found in the nucleus. Its function is as follows. May be involved in transcriptional regulation. The protein is Gastrula zinc finger protein XlCGF16.1 of Xenopus laevis (African clawed frog).